The sequence spans 650 residues: MKTKKSKSTLWFWLIILLAIIVTIIIIAVTVKGTTQVISDATFADWMSKSPQIDPNADKYWKNVIIYYGSNNTVVVKGSYFLESTGKYVNFVAYLTQKRFETIMADKPYPWPALVYQGSVGMALLVSLAPLLIYVLLFGGIIWFMMKSSSGAGAGAGNIFGMGKNRARAEKSDVKFANVAGIEEEKSELVELVDYLKFPAKYAEAGARAPKGVLMEGPPGTGKTLLAKAVAGEAGVSFFSIAGSEFEEMFVGVGASRVREMFNDAKKSAPAIIFIDEIDAVGRKRNNGMGSGGNEQTLNQLLVEMDGFGTNSGIIVMAATNRADVLDPALLRPGRFDRVIQVSLPDIKERKAILELHAKGKKIDGSVDWYRVAERTPGFSGAQLENVLNEAAILMVREKRDIITITEIDEAIDRVVGGPAKKSRAMTKQDKDIVSYHESGHALIGLKLDSASKVQKVTIIPRGNAGGYTIMTPKDETVFSSKKDLFATIAGYLGGRAAEEIMFGKENVTTGAHDDLDKATNIARRMVVQFGMSSLGMTKFLTMAEESYGKMEGTYSDETAARIDAEISKILEESYKIALKIIKENMETLELLAESLRVLETITAEQIEYINVNKKLPEEVLEQKNRMAKEDEKIKKGEIIDIKVEDLDID.

Topologically, residues 1-10 (MKTKKSKSTL) are cytoplasmic. Residues 11-31 (WFWLIILLAIIVTIIIIAVTV) traverse the membrane as a helical segment. The Extracellular portion of the chain corresponds to 32–123 (KGTTQVISDA…LVYQGSVGMA (92 aa)). Residues 124-144 (LLVSLAPLLIYVLLFGGIIWF) traverse the membrane as a helical segment. Topologically, residues 145 to 650 (MMKSSSGAGA…DIKVEDLDID (506 aa)) are cytoplasmic. 217-224 (GPPGTGKT) provides a ligand contact to ATP. Residue His-437 coordinates Zn(2+). The active site involves Glu-438. Residues His-441 and Asp-515 each contribute to the Zn(2+) site.

It in the central section; belongs to the AAA ATPase family. The protein in the C-terminal section; belongs to the peptidase M41 family. Homohexamer. The cofactor is Zn(2+).

The protein localises to the cell membrane. In terms of biological role, acts as a processive, ATP-dependent zinc metallopeptidase for both cytoplasmic and membrane proteins. Plays a role in the quality control of integral membrane proteins. This chain is ATP-dependent zinc metalloprotease FtsH, found in Mesoplasma florum (strain ATCC 33453 / NBRC 100688 / NCTC 11704 / L1) (Acholeplasma florum).